We begin with the raw amino-acid sequence, 167 residues long: Photosystem I assembly protein Ycf3 (167 aa).

3 TPR repeats span residues 35-68 (AFTY…EIDP), 72-105 (SYIL…NPSL), and 120-153 (GEQA…APSN).

Belongs to the Ycf3 family.

It is found in the plastid. The protein localises to the chloroplast thylakoid membrane. In terms of biological role, essential for the assembly of the photosystem I (PSI) complex. May act as a chaperone-like factor to guide the assembly of the PSI subunits. The protein is Photosystem I assembly protein Ycf3 of Marchantia polymorpha (Common liverwort).